A 231-amino-acid chain; its full sequence is Dephospho-CoA kinase domain-containing protein (231 aa).

The DPCK domain maps to 3–207; that stretch reads LVGLTGGIAS…RSLEYLPLRF (205 aa). Residue 8–15 participates in ATP binding; the sequence is GGIASGKS.

This sequence belongs to the CoaE family.

This is Dephospho-CoA kinase domain-containing protein (DCAKD) from Homo sapiens (Human).